Here is a 222-residue protein sequence, read N- to C-terminus: UPF0173 metal-dependent hydrolase Kcr_0055 (222 aa).

The protein belongs to the UPF0173 family.

This Korarchaeum cryptofilum (strain OPF8) protein is UPF0173 metal-dependent hydrolase Kcr_0055.